A 254-amino-acid polypeptide reads, in one-letter code: 3-oxo-5-alpha-steroid 4-dehydrogenase 2 (254 aa).

Helical transmembrane passes span Val-8–Gly-28, Pro-72–Phe-92, Phe-146–Thr-166, and Leu-206–Met-226.

This sequence belongs to the steroid 5-alpha reductase family. In terms of tissue distribution, expressed in high levels in the prostate and many other androgen-sensitive tissues.

It is found in the microsome membrane. Its subcellular location is the endoplasmic reticulum membrane. The enzyme catalyses a 3-oxo-5alpha-steroid + NADP(+) = a 3-oxo-Delta(4)-steroid + NADPH + H(+). The catalysed reaction is 17beta-hydroxy-5alpha-androstan-3-one + NADP(+) = testosterone + NADPH + H(+). It carries out the reaction 5alpha-pregnane-3,20-dione + NADP(+) = progesterone + NADPH + H(+). In terms of biological role, converts testosterone (T) into 5-alpha-dihydrotestosterone (DHT) and progesterone or corticosterone into their corresponding 5-alpha-3-oxosteroids. It plays a central role in sexual differentiation and androgen physiology. In Rattus norvegicus (Rat), this protein is 3-oxo-5-alpha-steroid 4-dehydrogenase 2 (Srd5a2).